The primary structure comprises 200 residues: Large ribosomal subunit protein uL4 (200 aa).

Residues 38–65 (GRQGSKAQKTRSEVSGGGKKPWRQKGTG) form a disordered region.

Belongs to the universal ribosomal protein uL4 family. In terms of assembly, part of the 50S ribosomal subunit.

Its function is as follows. One of the primary rRNA binding proteins, this protein initially binds near the 5'-end of the 23S rRNA. It is important during the early stages of 50S assembly. It makes multiple contacts with different domains of the 23S rRNA in the assembled 50S subunit and ribosome. Forms part of the polypeptide exit tunnel. The sequence is that of Large ribosomal subunit protein uL4 from Pseudomonas aeruginosa (strain LESB58).